Reading from the N-terminus, the 161-residue chain is MKRIIRISFTDAEATDSSSDEDTEERGGASQTRRRGKRLVKEIVIDPSDSADKLDVCKTRFKIRIPAEFLKTAKTEKKYRGVRQRPWGKWVAEIRCGRGACKGRRDRLWLGTFNTAEEAALAYDNASIKLIGPHAPTNFGLPAENQEDKTVIGASEVARGA.

The segment at 1 to 35 (MKRIIRISFTDAEATDSSSDEDTEERGGASQTRRR) is disordered. A DNA-binding region (AP2/ERF) is located at residues 78–140 (KYRGVRQRPW…IGPHAPTNFG (63 aa)).

It belongs to the AP2/ERF transcription factor family. ERF subfamily.

It localises to the nucleus. Probably acts as a transcriptional activator. Binds to the GCC-box pathogenesis-related promoter element. May be involved in the regulation of gene expression by stress factors and by components of stress signal transduction pathways. The polypeptide is Ethylene-responsive transcription factor ERF070 (ERF070) (Arabidopsis thaliana (Mouse-ear cress)).